A 157-amino-acid chain; its full sequence is Protein Smg homolog (157 aa).

The protein belongs to the Smg family.

This Aliivibrio fischeri (strain MJ11) (Vibrio fischeri) protein is Protein Smg homolog.